The sequence spans 54 residues: Large ribosomal subunit protein bL33A (54 aa).

Belongs to the bacterial ribosomal protein bL33 family.

The sequence is that of Large ribosomal subunit protein bL33A from Streptomyces avermitilis (strain ATCC 31267 / DSM 46492 / JCM 5070 / NBRC 14893 / NCIMB 12804 / NRRL 8165 / MA-4680).